A 356-amino-acid chain; its full sequence is Protein disulfide isomerase crld-1 (356 aa).

The signal sequence occupies residues 1-17; it reads MSRILLLLAVLIGATSQ. The Lumenal portion of the chain corresponds to 18 to 299; that stretch reads KEVTIKNEKC…DRPFMPIDQQ (282 aa). Positions 27 to 30 match the CXXC motif; that stretch reads CRTC. A disulfide bridge links Cys-27 with Cys-30. The N-linked (GlcNAc...) asparagine glycan is linked to Asn-122. In terms of domain architecture, EGF-like 1 spans 150–188; that stretch reads GLSEKADVCFGKGSCHGDGSREGSGKCKCETGYTGNLCR. Intrachain disulfides connect Cys-158-Cys-176, Cys-178-Cys-187, Cys-245-Cys-258, Cys-251-Cys-267, and Cys-269-Cys-281. The region spanning 241-282 is the EGF-like 2; calcium-binding domain; the sequence is DVNECQNESACTKEHEICVNTVGSFKCECKEGYKKDDEQNCQ. An N-linked (GlcNAc...) asparagine glycan is attached at Asn-247. Residues 300–317 traverse the membrane as a helical segment; sequence LKLIAFSSLIIIITFVVW. Topologically, residues 318–321 are cytoplasmic; the sequence is HGSP. A helical membrane pass occupies residues 322–341; the sequence is VLYVLTGITIVALILVDLYV. The Lumenal portion of the chain corresponds to 342–356; it reads NPDTIPDEAKRFLGY.

The protein belongs to the CRELD family. Interacts with unc-29. Isoforms a: Widely expressed in tissues including body wall muscles, neurons, pharynx, hypodermis, seam cells, intestine and gonad. Isoform b: Widely expressed in tissues including body wall muscles, neurons, pharynx, hypodermis, seam cells, intestine and gonad.

It localises to the endoplasmic reticulum membrane. It is found in the endoplasmic reticulum lumen. It carries out the reaction Catalyzes the rearrangement of -S-S- bonds in proteins.. Its function is as follows. Protein disulfide isomerase which associates with the unc-29 subunit of levamisole-sensitive nicotinic acetylcholine receptors (L-nAChR) to promote L-nAChR assembly in the endoplasmic reticulum at neuromuscular junctions. In terms of biological role, promotes L-nAChR assembly in the endoplasmic reticulum at neuromuscular junctions. The protein is Protein disulfide isomerase crld-1 of Caenorhabditis elegans.